Here is a 407-residue protein sequence, read N- to C-terminus: Arginine biosynthesis bifunctional protein ArgJ (407 aa).

Substrate is bound by residues T154, K180, T191, E278, N402, and S407. T191 serves as the catalytic Nucleophile.

The protein belongs to the ArgJ family. In terms of assembly, heterotetramer of two alpha and two beta chains.

Its subcellular location is the cytoplasm. The enzyme catalyses N(2)-acetyl-L-ornithine + L-glutamate = N-acetyl-L-glutamate + L-ornithine. The catalysed reaction is L-glutamate + acetyl-CoA = N-acetyl-L-glutamate + CoA + H(+). It participates in amino-acid biosynthesis; L-arginine biosynthesis; L-ornithine and N-acetyl-L-glutamate from L-glutamate and N(2)-acetyl-L-ornithine (cyclic): step 1/1. It functions in the pathway amino-acid biosynthesis; L-arginine biosynthesis; N(2)-acetyl-L-ornithine from L-glutamate: step 1/4. In terms of biological role, catalyzes two activities which are involved in the cyclic version of arginine biosynthesis: the synthesis of N-acetylglutamate from glutamate and acetyl-CoA as the acetyl donor, and of ornithine by transacetylation between N(2)-acetylornithine and glutamate. The protein is Arginine biosynthesis bifunctional protein ArgJ of Psychrobacter arcticus (strain DSM 17307 / VKM B-2377 / 273-4).